We begin with the raw amino-acid sequence, 287 residues long: ATP synthase gamma chain (287 aa).

This sequence belongs to the ATPase gamma chain family. F-type ATPases have 2 components, CF(1) - the catalytic core - and CF(0) - the membrane proton channel. CF(1) has five subunits: alpha(3), beta(3), gamma(1), delta(1), epsilon(1). CF(0) has three main subunits: a, b and c.

It localises to the cell inner membrane. Functionally, produces ATP from ADP in the presence of a proton gradient across the membrane. The gamma chain is believed to be important in regulating ATPase activity and the flow of protons through the CF(0) complex. The chain is ATP synthase gamma chain from Salmonella agona (strain SL483).